Here is a 67-residue protein sequence, read N- to C-terminus: MRIHFLLFALLFLFLMPVPGNGGIINMLQKSYCKIRKGRCALLGCLPKEEQIGSCSVSGRKCCRKKK.

An N-terminal signal peptide occupies residues 1 to 22; the sequence is MRIHFLLFALLFLFLMPVPGNG. 3 disulfide bridges follow: Cys-33–Cys-62, Cys-40–Cys-55, and Cys-45–Cys-63.

This sequence belongs to the beta-defensin family.

The protein resides in the secreted. Functionally, exhibits antimicrobial activity against Gram-positive and Gram-negative bacteria. The sequence is that of Beta-defensin 103A (DEFB103A) from Equus caballus (Horse).